We begin with the raw amino-acid sequence, 101 residues long: MAKLALIEREKKRARLAAKYAPKRAELKAIIGDMSKSDEEHYAARLELQQLPRNSNPTRKRNRCAITGRPRGTFRKFGLARNKIREIAFRGEIPGLTKASW.

The protein belongs to the universal ribosomal protein uS14 family. Part of the 30S ribosomal subunit. Contacts proteins S3 and S10.

Its function is as follows. Binds 16S rRNA, required for the assembly of 30S particles and may also be responsible for determining the conformation of the 16S rRNA at the A site. The polypeptide is Small ribosomal subunit protein uS14 (Paraburkholderia phytofirmans (strain DSM 17436 / LMG 22146 / PsJN) (Burkholderia phytofirmans)).